The following is a 425-amino-acid chain: Histone-binding protein RBBP7 (425 aa).

WD repeat units lie at residues 47 to 122 (QWLP…KINH), 128 to 173 (RARY…LRLR), 181 to 217 (GLSW…KVVD), 228 to 269 (VVED…HSVD), 275 to 312 (VNCL…LHSF), 318 to 369 (EIFQ…LFIH), and 376 to 403 (ISDF…IWQM).

It belongs to the WD repeat RBAP46/RBAP48/MSI1 family. As to quaternary structure, binds directly to helix 1 of the histone fold of histone H4, a region that is not accessible when H4 is in chromatin.

The protein resides in the nucleus. Functionally, core histone-binding subunit that may target chromatin remodeling factors, histone acetyltransferases and histone deacetylases to their histone substrates in a manner that is regulated by nucleosomal DNA. Component of several complexes which regulate chromatin metabolism. The polypeptide is Histone-binding protein RBBP7 (rbbp7) (Xenopus laevis (African clawed frog)).